Here is a 144-residue protein sequence, read N- to C-terminus: Large ribosomal subunit protein uL11 (144 aa).

The protein belongs to the universal ribosomal protein uL11 family. In terms of assembly, part of the ribosomal stalk of the 50S ribosomal subunit. Interacts with L10 and the large rRNA to form the base of the stalk. L10 forms an elongated spine to which L12 dimers bind in a sequential fashion forming a multimeric L10(L12)X complex. Post-translationally, one or more lysine residues are methylated.

Forms part of the ribosomal stalk which helps the ribosome interact with GTP-bound translation factors. This chain is Large ribosomal subunit protein uL11, found in Corynebacterium glutamicum (strain R).